The sequence spans 250 residues: Trypsin (250 aa).

An N-terminal signal peptide occupies residues 1-15 (MRLLALLLMVGAAVA). Residues 16-22 (VPREDGR) constitute a propeptide, activation peptide. In terms of domain architecture, Peptidase S1 spans 23–247 (IIGGHECAAH…FLGWIERTLE (225 aa)). 6 cysteine pairs are disulfide-bonded: C29/C163, C47/C63, C133/C236, C140/C209, C174/C188, and C199/C223. Catalysis depends on charge relay system residues H62 and D106. Residue S203 is the Charge relay system of the active site.

It belongs to the peptidase S1 family.

The protein localises to the secreted. The protein resides in the extracellular space. It catalyses the reaction Preferential cleavage: Arg-|-Xaa, Lys-|-Xaa.. The protein is Trypsin of Pleuronectes platessa (European plaice).